Consider the following 125-residue polypeptide: Histone H2A (125 aa).

Positions 1 to 18 (MSGRGKGGKAKAKAKSRS) are enriched in basic residues. The segment at 1–21 (MSGRGKGGKAKAKAKSRSSRA) is disordered. Position 2 is an N-acetylserine (serine 2). Glutamine 104 carries the post-translational modification N5-methylglutamine.

The protein belongs to the histone H2A family. In terms of assembly, the nucleosome is a histone octamer containing two molecules each of H2A, H2B, H3 and H4 assembled in one H3-H4 heterotetramer and two H2A-H2B heterodimers. The octamer wraps approximately 147 bp of DNA.

It localises to the nucleus. The protein localises to the chromosome. In terms of biological role, core component of nucleosome. Nucleosomes wrap and compact DNA into chromatin, limiting DNA accessibility to the cellular machineries which require DNA as a template. Histones thereby play a central role in transcription regulation, DNA repair, DNA replication and chromosomal stability. DNA accessibility is regulated via a complex set of post-translational modifications of histones, also called histone code, and nucleosome remodeling. The protein is Histone H2A of Mytilus trossulus (Blue mussel).